The following is a 305-amino-acid chain: Oxygen-dependent coproporphyrinogen-III oxidase (305 aa).

Ser97 lines the substrate pocket. 2 residues coordinate a divalent metal cation: His101 and His111. His111 acts as the Proton donor in catalysis. A substrate-binding site is contributed by 113 to 115 (NVR). A divalent metal cation-binding residues include His150 and His180. Residues 245–280 (YVEFNLVWDRGTHFGLQSGGRTESILLSMPPLASWA) form an important for dimerization region. 263-265 (GGR) lines the substrate pocket.

It belongs to the aerobic coproporphyrinogen-III oxidase family. In terms of assembly, homodimer. A divalent metal cation serves as cofactor.

It is found in the cytoplasm. The catalysed reaction is coproporphyrinogen III + O2 + 2 H(+) = protoporphyrinogen IX + 2 CO2 + 2 H2O. It participates in porphyrin-containing compound metabolism; protoporphyrin-IX biosynthesis; protoporphyrinogen-IX from coproporphyrinogen-III (O2 route): step 1/1. Functionally, involved in the heme biosynthesis. Catalyzes the aerobic oxidative decarboxylation of propionate groups of rings A and B of coproporphyrinogen-III to yield the vinyl groups in protoporphyrinogen-IX. The protein is Oxygen-dependent coproporphyrinogen-III oxidase of Variovorax paradoxus (strain S110).